The sequence spans 688 residues: MIOREX complex component 1 (688 aa).

The segment at 1–24 (MGLKITKGQLRTKDLNQSSSKSSQ) is disordered. The N-terminal 46 residues, 1–46 (MGLKITKGQLRTKDLNQSSSKSSQSSRIGVDTCIFTRMLPRINTAI), are a transit peptide targeting the mitochondrion.

In terms of assembly, associates with the mitochondrial ribosome.

Its subcellular location is the mitochondrion. Functionally, component of MIOREX complexes, large expressome-like assemblies of ribosomes with factors involved in all the steps of post-transcriptional gene expression. This is MIOREX complex component 1 from Saccharomyces cerevisiae (strain ATCC 204508 / S288c) (Baker's yeast).